A 442-amino-acid polypeptide reads, in one-letter code: tRNA(Ile)-lysidine synthase (442 aa).

ATP is bound at residue S28 to S33.

Belongs to the tRNA(Ile)-lysidine synthase family.

It localises to the cytoplasm. It carries out the reaction cytidine(34) in tRNA(Ile2) + L-lysine + ATP = lysidine(34) in tRNA(Ile2) + AMP + diphosphate + H(+). Functionally, ligates lysine onto the cytidine present at position 34 of the AUA codon-specific tRNA(Ile) that contains the anticodon CAU, in an ATP-dependent manner. Cytidine is converted to lysidine, thus changing the amino acid specificity of the tRNA from methionine to isoleucine. The polypeptide is tRNA(Ile)-lysidine synthase (Pseudomonas aeruginosa (strain ATCC 15692 / DSM 22644 / CIP 104116 / JCM 14847 / LMG 12228 / 1C / PRS 101 / PAO1)).